The chain runs to 198 residues: FMN-dependent NADH:quinone oxidoreductase (198 aa).

Ser-10 lines the FMN pocket.

This sequence belongs to the azoreductase type 1 family. Homodimer. The cofactor is FMN.

The catalysed reaction is 2 a quinone + NADH + H(+) = 2 a 1,4-benzosemiquinone + NAD(+). The enzyme catalyses N,N-dimethyl-1,4-phenylenediamine + anthranilate + 2 NAD(+) = 2-(4-dimethylaminophenyl)diazenylbenzoate + 2 NADH + 2 H(+). In terms of biological role, quinone reductase that provides resistance to thiol-specific stress caused by electrophilic quinones. Its function is as follows. Also exhibits azoreductase activity. Catalyzes the reductive cleavage of the azo bond in aromatic azo compounds to the corresponding amines. The sequence is that of FMN-dependent NADH:quinone oxidoreductase from Paraburkholderia phymatum (strain DSM 17167 / CIP 108236 / LMG 21445 / STM815) (Burkholderia phymatum).